Reading from the N-terminus, the 499-residue chain is Importin subunit alpha-8 (499 aa).

Residues 1–57 (MATSKAPKERLKNYKYRGKEMSLPRQQRIASSLQLRKTRKDEQVLKRRNIDLFSSDM) enclose the IBB domain. ARM repeat units lie at residues 101-141 (TPPL…NIAS), 144-183 (SEQTRAVVKEGAIQPLIELLCSPHLTVSEQAVWALGNIAG), 186-226 (AEFR…NLCR), 229-268 (DPYPSESAVRQMLPPLCQLLLHRDNEILADTCWALSYLTK), 271-310 (KEYIHHVVTTGILPRLVELMTSSELSISIPCLHTIGNIVA), 313-352 (DEQTQMAIDAGMLKVLGQVLKHPKTSIQVLAAWTMSNVAA), 354-393 (PRHQVEQLLCNLLPILVDLLRNAELKVQKEVVCTVINIAT), and 397-436 (QDQLTLLAHSGILEPMLSLLSAPDLEVVIIVLDIISYLLQ).

The protein belongs to the importin alpha family. In terms of assembly, binds to importin subunit beta-1/KPNB1 via the IBB domain; this complex dissociates in the presence of RAN-GTP. Shows a limited binding to the RB1 nuclear localization signal (NLS), but not to the SV40, nor NPM1 NLSs. Interacts with RSL1D1. Expressed predominantly in ovary. Isoform 1 is the predominant form.

Its subcellular location is the nucleus. Functionally, functions in nuclear protein import. This is Importin subunit alpha-8 (Kpna7) from Mus musculus (Mouse).